Reading from the N-terminus, the 291-residue chain is MADLDDIKDGKDFGIDIPQKNSLFELKGCGALDWGMQSRLSRIFNPKTNRTVMLAFDHGYFQGPTTGLERIDINIAPLFPHTDVLMCTRGILRSQVPPATNKPVVLRASGANSILTELSNEAVAVAMEDALRLNVCAVAAQVYIGSEYEHQSIKNIIKLVDQGMRYGMPTMAVTGVGKDMVRDQRYFSLATRIAAEMGAQIIKTYYVDTGFERIASGCPVPIVIAGGKKLPEKEALEMCYQAIDQGAAGVDMGRNIFQSEAPVAMLKAVQAVVHQNENASKAYELFLSEKQ.

The active-site Schiff-base intermediate with substrate is the Lys-203.

The protein belongs to the DeoC/FbaB aldolase family. Homodecamer.

Its subcellular location is the cytoplasm. The catalysed reaction is dihydroxyacetone phosphate + acetyl-CoA = 3-hydroxy-2,4-dioxopentyl phosphate + CoA. Functionally, involved in the degradation of phospho-AI-2, thereby terminating induction of the lsr operon and closing the AI-2 signaling cycle. Catalyzes the transfer of an acetyl moiety from 3-hydroxy-5-phosphonooxypentane-2,4-dione to CoA to form glycerone phosphate and acetyl-CoA. In Photorhabdus laumondii subsp. laumondii (strain DSM 15139 / CIP 105565 / TT01) (Photorhabdus luminescens subsp. laumondii), this protein is 3-hydroxy-5-phosphonooxypentane-2,4-dione thiolase.